The primary structure comprises 206 residues: Histidine biosynthesis bifunctional protein HisIE (206 aa).

Residues 1–117 are phosphoribosyl-AMP cyclohydrolase; it reads MGSNEVATGD…SCFPSAPGQF (117 aa). A phosphoribosyl-ATP pyrophosphohydrolase region spans residues 118–206; the sequence is LGSLDALVAE…AAALLESRHQ (89 aa).

In the N-terminal section; belongs to the PRA-CH family. The protein in the C-terminal section; belongs to the PRA-PH family.

It is found in the cytoplasm. It carries out the reaction 1-(5-phospho-beta-D-ribosyl)-ATP + H2O = 1-(5-phospho-beta-D-ribosyl)-5'-AMP + diphosphate + H(+). The catalysed reaction is 1-(5-phospho-beta-D-ribosyl)-5'-AMP + H2O = 1-(5-phospho-beta-D-ribosyl)-5-[(5-phospho-beta-D-ribosylamino)methylideneamino]imidazole-4-carboxamide. The protein operates within amino-acid biosynthesis; L-histidine biosynthesis; L-histidine from 5-phospho-alpha-D-ribose 1-diphosphate: step 2/9. It participates in amino-acid biosynthesis; L-histidine biosynthesis; L-histidine from 5-phospho-alpha-D-ribose 1-diphosphate: step 3/9. The chain is Histidine biosynthesis bifunctional protein HisIE from Xanthomonas axonopodis pv. citri (strain 306).